The chain runs to 539 residues: Heparanase-like protein 2 (539 aa).

An N-terminal signal peptide occupies residues Met1–Gly21. N-linked (GlcNAc...) asparagine glycans are attached at residues Asn143, Asn163, and Asn181. Residue Glu198 is the Proton donor of the active site. Asn300 carries an N-linked (GlcNAc...) asparagine glycan. The active-site Nucleophile is Glu316. Residue Asn421 is glycosylated (N-linked (GlcNAc...) asparagine).

This sequence belongs to the glycosyl hydrolase 79 family.

The protein localises to the lysosome membrane. Its subcellular location is the secreted. In terms of biological role, endoglycosidase which is a cell surface and extracellular matrix-degrading enzyme. Cleaves heparan sulfate proteoglycans (HSPGs) into heparan sulfate side chains and core proteoglycans. This chain is Heparanase-like protein 2, found in Arabidopsis thaliana (Mouse-ear cress).